A 247-amino-acid chain; its full sequence is Probable transcriptional regulatory protein Gura_1416 (247 aa).

This sequence belongs to the TACO1 family.

The protein resides in the cytoplasm. The sequence is that of Probable transcriptional regulatory protein Gura_1416 from Geotalea uraniireducens (strain Rf4) (Geobacter uraniireducens).